Consider the following 42-residue polypeptide: Photosystem I reaction center subunit IX (42 aa).

Residues 7 to 27 (YLSTAPVLATIWFIILAGLLI) form a helical membrane-spanning segment.

This sequence belongs to the PsaJ family.

The protein localises to the plastid. It is found in the chloroplast thylakoid membrane. Functionally, may help in the organization of the PsaE and PsaF subunits. This is Photosystem I reaction center subunit IX from Mesostigma viride (Green alga).